Reading from the N-terminus, the 280-residue chain is Tritrans,polycis-undecaprenyl-diphosphate synthase (geranylgeranyl-diphosphate specific) (280 aa).

Residue Asp-57 is part of the active site. Asp-57 serves as a coordination point for Mg(2+). Residues 58–61 (GNRR), Arg-70, His-74, and 102–104 (STE) contribute to the substrate site. Asn-105 serves as the catalytic Proton acceptor. Substrate is bound by residues Phe-106, Arg-108, Arg-229, and 235–237 (RIS). Residue Glu-248 coordinates Mg(2+).

This sequence belongs to the UPP synthase family. In terms of assembly, homodimer. Mg(2+) serves as cofactor.

It carries out the reaction geranylgeranyl diphosphate + 7 isopentenyl diphosphate = tri-trans,hepta-cis-undecaprenyl diphosphate + 7 diphosphate. Functionally, catalyzes the sequential condensation of isopentenyl diphosphate (IPP) with geranylgeranyl diphosphate (GGPP) to yield (2Z,6Z,10Z,14Z,18Z,22Z,26Z,30E,34E,38E)-undecaprenyl diphosphate (tritrans,heptacis-UPP). It is probably the precursor of glycosyl carrier lipids. The protein is Tritrans,polycis-undecaprenyl-diphosphate synthase (geranylgeranyl-diphosphate specific) of Methanocaldococcus jannaschii (strain ATCC 43067 / DSM 2661 / JAL-1 / JCM 10045 / NBRC 100440) (Methanococcus jannaschii).